The sequence spans 367 residues: 2-aminoethylphosphonate--pyruvate transaminase (367 aa).

K193 is modified (N6-(pyridoxal phosphate)lysine).

This sequence belongs to the class-V pyridoxal-phosphate-dependent aminotransferase family. PhnW subfamily. Homodimer. Pyridoxal 5'-phosphate is required as a cofactor.

The catalysed reaction is (2-aminoethyl)phosphonate + pyruvate = phosphonoacetaldehyde + L-alanine. In terms of biological role, involved in phosphonate degradation. This chain is 2-aminoethylphosphonate--pyruvate transaminase, found in Vibrio vulnificus (strain CMCP6).